The following is a 333-amino-acid chain: Ketol-acid reductoisomerase (NADP(+)) (333 aa).

The KARI N-terminal Rossmann domain maps to 1–181 (MKVYYDQDAD…GGARSGVIET (181 aa)). NADP(+) contacts are provided by residues 24 to 27 (YGSQ), Arg-47, and 82 to 85 (DEVQ). The active site involves His-107. Gly-133 contacts NADP(+). Residues 182-327 (TFREETETDL…KELRSMMPWL (146 aa)) enclose the KARI C-terminal knotted domain. Mg(2+)-binding residues include Asp-190, Glu-194, Glu-226, and Glu-230. A substrate-binding site is contributed by Ser-251.

This sequence belongs to the ketol-acid reductoisomerase family. Requires Mg(2+) as cofactor.

The enzyme catalyses (2R)-2,3-dihydroxy-3-methylbutanoate + NADP(+) = (2S)-2-acetolactate + NADPH + H(+). The catalysed reaction is (2R,3R)-2,3-dihydroxy-3-methylpentanoate + NADP(+) = (S)-2-ethyl-2-hydroxy-3-oxobutanoate + NADPH + H(+). It participates in amino-acid biosynthesis; L-isoleucine biosynthesis; L-isoleucine from 2-oxobutanoate: step 2/4. The protein operates within amino-acid biosynthesis; L-valine biosynthesis; L-valine from pyruvate: step 2/4. Its function is as follows. Involved in the biosynthesis of branched-chain amino acids (BCAA). Catalyzes an alkyl-migration followed by a ketol-acid reduction of (S)-2-acetolactate (S2AL) to yield (R)-2,3-dihydroxy-isovalerate. In the isomerase reaction, S2AL is rearranged via a Mg-dependent methyl migration to produce 3-hydroxy-3-methyl-2-ketobutyrate (HMKB). In the reductase reaction, this 2-ketoacid undergoes a metal-dependent reduction by NADPH to yield (R)-2,3-dihydroxy-isovalerate. This is Ketol-acid reductoisomerase (NADP(+)) from Desulfovibrio desulfuricans (strain ATCC 27774 / DSM 6949 / MB).